The chain runs to 121 residues: Ubiquitin-related modifier 1 (121 aa).

Gly-121 carries the post-translational modification 1-thioglycine. Gly-121 is covalently cross-linked (Glycyl lysine isopeptide (Gly-Lys) (interchain with K-? in acceptor proteins)).

The protein belongs to the URM1 family. Post-translationally, C-terminal thiocarboxylation occurs in 2 steps, it is first acyl-adenylated (-COAMP) via the hesA/moeB/thiF part of UBA4, then thiocarboxylated (-COSH) via the rhodanese domain of UBA4.

The protein resides in the cytoplasm. Its pathway is tRNA modification; 5-methoxycarbonylmethyl-2-thiouridine-tRNA biosynthesis. In terms of biological role, acts as a sulfur carrier required for 2-thiolation of mcm(5)S(2)U at tRNA wobble positions of cytosolic tRNA(Lys), tRNA(Glu) and tRNA(Gln). Serves as sulfur donor in tRNA 2-thiolation reaction by being thiocarboxylated (-COSH) at its C-terminus by the MOCS3 homolog UBA4. The sulfur is then transferred to tRNA to form 2-thiolation of mcm(5)S(2)U. Prior mcm(5) tRNA modification by the elongator complex is required for 2-thiolation. Also acts as a ubiquitin-like protein (UBL) that is covalently conjugated via an isopeptide bond to lysine residues of target proteins such as AHP1. The thiocarboxylated form serves as substrate for conjugation and oxidative stress specifically induces the formation of UBL-protein conjugates. The sequence is that of Ubiquitin-related modifier 1 from Ajellomyces capsulatus (strain NAm1 / WU24) (Darling's disease fungus).